Here is a 254-residue protein sequence, read N- to C-terminus: 5-oxoprolinase subunit A (254 aa).

Belongs to the LamB/PxpA family. As to quaternary structure, forms a complex composed of PxpA, PxpB and PxpC.

The enzyme catalyses 5-oxo-L-proline + ATP + 2 H2O = L-glutamate + ADP + phosphate + H(+). Its function is as follows. Catalyzes the cleavage of 5-oxoproline to form L-glutamate coupled to the hydrolysis of ATP to ADP and inorganic phosphate. This chain is 5-oxoprolinase subunit A, found in Bacillus mycoides (strain KBAB4) (Bacillus weihenstephanensis).